Here is a 162-residue protein sequence, read N- to C-terminus: ATP synthase subunit b (162 aa).

A helical transmembrane segment spans residues 10-29 (LIWTIINFAVLLWGMHRFLY).

This sequence belongs to the ATPase B chain family. In terms of assembly, F-type ATPases have 2 components, F(1) - the catalytic core - and F(0) - the membrane proton channel. F(1) has five subunits: alpha(3), beta(3), gamma(1), delta(1), epsilon(1). F(0) has three main subunits: a(1), b(2) and c(10-14). The alpha and beta chains form an alternating ring which encloses part of the gamma chain. F(1) is attached to F(0) by a central stalk formed by the gamma and epsilon chains, while a peripheral stalk is formed by the delta and b chains.

Its subcellular location is the cell membrane. Its function is as follows. F(1)F(0) ATP synthase produces ATP from ADP in the presence of a proton or sodium gradient. F-type ATPases consist of two structural domains, F(1) containing the extramembraneous catalytic core and F(0) containing the membrane proton channel, linked together by a central stalk and a peripheral stalk. During catalysis, ATP synthesis in the catalytic domain of F(1) is coupled via a rotary mechanism of the central stalk subunits to proton translocation. Functionally, component of the F(0) channel, it forms part of the peripheral stalk, linking F(1) to F(0). The chain is ATP synthase subunit b from Symbiobacterium thermophilum (strain DSM 24528 / JCM 14929 / IAM 14863 / T).